We begin with the raw amino-acid sequence, 220 residues long: 7-cyano-7-deazaguanine synthase (220 aa).

10–20 (FSGGQDSTTCL) is a binding site for ATP. Cys-188, Cys-197, Cys-200, and Cys-203 together coordinate Zn(2+).

Belongs to the QueC family. It depends on Zn(2+) as a cofactor.

It carries out the reaction 7-carboxy-7-deazaguanine + NH4(+) + ATP = 7-cyano-7-deazaguanine + ADP + phosphate + H2O + H(+). The protein operates within purine metabolism; 7-cyano-7-deazaguanine biosynthesis. Catalyzes the ATP-dependent conversion of 7-carboxy-7-deazaguanine (CDG) to 7-cyano-7-deazaguanine (preQ(0)). In Neisseria meningitidis serogroup C (strain 053442), this protein is 7-cyano-7-deazaguanine synthase.